The chain runs to 78 residues: Small ribosomal subunit protein bS18B (78 aa).

The protein belongs to the bacterial ribosomal protein bS18 family. In terms of assembly, part of the 30S ribosomal subunit. Forms a tight heterodimer with protein bS6.

Its function is as follows. Binds as a heterodimer with protein bS6 to the central domain of the 16S rRNA, where it helps stabilize the platform of the 30S subunit. This Streptomyces griseus subsp. griseus (strain JCM 4626 / CBS 651.72 / NBRC 13350 / KCC S-0626 / ISP 5235) protein is Small ribosomal subunit protein bS18B.